A 340-amino-acid chain; its full sequence is Protein RecA (340 aa).

65–72 is a binding site for ATP; the sequence is GPESGGKT.

This sequence belongs to the RecA family.

It localises to the cytoplasm. Its function is as follows. Can catalyze the hydrolysis of ATP in the presence of single-stranded DNA, the ATP-dependent uptake of single-stranded DNA by duplex DNA, and the ATP-dependent hybridization of homologous single-stranded DNAs. It interacts with LexA causing its activation and leading to its autocatalytic cleavage. In Thermus thermophilus (strain ATCC BAA-163 / DSM 7039 / HB27), this protein is Protein RecA.